The following is a 471-amino-acid chain: Probable ribonuclease FAU-1 (471 aa).

The protein belongs to the FAU-1 family.

Probable RNase involved in rRNA stability through maturation and/or degradation of precursor rRNAs. Binds to RNA in loop regions with AU-rich sequences. In Thermococcus gammatolerans (strain DSM 15229 / JCM 11827 / EJ3), this protein is Probable ribonuclease FAU-1.